A 1485-amino-acid chain; its full sequence is Chromosome partition protein MukB (1485 aa).

Residue Gly34–Ser41 participates in ATP binding. Coiled-coil stretches lie at residues Leu337 to Gln480 and Gln509 to Leu605. Residues Pro666–Arg783 form a flexible hinge region. Coiled coils occupy residues Glu835–His915 and Gly977–Gly1116.

This sequence belongs to the SMC family. MukB subfamily. As to quaternary structure, homodimerization via its hinge domain. Binds to DNA via its C-terminal region. Interacts, and probably forms a ternary complex, with MukE and MukF via its C-terminal region. The complex formation is stimulated by calcium or magnesium. Interacts with tubulin-related protein FtsZ.

It localises to the cytoplasm. It is found in the nucleoid. Its function is as follows. Plays a central role in chromosome condensation, segregation and cell cycle progression. Functions as a homodimer, which is essential for chromosome partition. Involved in negative DNA supercoiling in vivo, and by this means organize and compact chromosomes. May achieve or facilitate chromosome segregation by condensation DNA from both sides of a centrally located replisome during cell division. This Yersinia pseudotuberculosis serotype IB (strain PB1/+) protein is Chromosome partition protein MukB.